The following is a 158-amino-acid chain: C-type lectin mannose-binding isoform (158 aa).

Residues 1 to 23 (MGRFLLVTLSLLVGAFSLNEANS) form the signal peptide. Cystine bridges form between Cys-26–Cys-37, Cys-54–Cys-154, Cys-61–Cys-156, and Cys-129–Cys-146. The C-type lectin domain maps to 33 to 155 (KNGFCYKVFN…CKALYSFICQ (123 aa)). A Mannose-binding motif is present at residues 119 to 121 (EPN). Asn-121 carries an N-linked (GlcNAc...) asparagine glycan. The Ca(2+) site is built by Glu-127, Asn-142, and Asp-143.

The protein belongs to the true venom lectin family. As to quaternary structure, dimer. Probably disulfide-linked homodimer. In terms of tissue distribution, expressed by the venom gland.

The protein localises to the secreted. Functionally, mannose-binding lectin that binds to and agglutinates rabbit (but not human) erythrocytes in a calcium-dependent manner. In Oxyuranus scutellatus (Coastal taipan), this protein is C-type lectin mannose-binding isoform.